A 494-amino-acid chain; its full sequence is Alpha-amylase-related protein (494 aa).

A signal peptide spans 1–20 (MIKFALALTLCLAGASLSLA). Gln-21 carries the pyrrolidone carboxylic acid modification. Cys-48 and Cys-104 form a disulfide bridge. Asn-118, Gln-169, and Asp-178 together coordinate Ca(2+). The cysteines at positions 157 and 171 are disulfide-linked. Residue Arg-206 participates in chloride binding. Catalysis depends on Asp-208, which acts as the Nucleophile. A Ca(2+)-binding site is contributed by His-212. The active-site Proton donor is Glu-245. Asn-308 and Arg-343 together coordinate chloride. Disulfide bonds link Cys-376-Cys-382, Cys-418-Cys-441, and Cys-448-Cys-460.

This sequence belongs to the glycosyl hydrolase 13 family. Monomer. Requires Ca(2+) as cofactor. It depends on chloride as a cofactor.

It localises to the secreted. It catalyses the reaction Endohydrolysis of (1-&gt;4)-alpha-D-glucosidic linkages in polysaccharides containing three or more (1-&gt;4)-alpha-linked D-glucose units.. The chain is Alpha-amylase-related protein (Amyrel) from Drosophila bocqueti (Fruit fly).